Reading from the N-terminus, the 199-residue chain is Superoxide dismutase [Mn] 2 (199 aa).

Residues histidine 28, histidine 75, aspartate 157, and histidine 161 each coordinate Mn(2+).

It belongs to the iron/manganese superoxide dismutase family. Requires Mn(2+) as cofactor.

The enzyme catalyses 2 superoxide + 2 H(+) = H2O2 + O2. Its function is as follows. Destroys superoxide anion radicals which are normally produced within the cells and which are toxic to biological systems. This chain is Superoxide dismutase [Mn] 2 (sod2), found in Haloferax volcanii (strain ATCC 29605 / DSM 3757 / JCM 8879 / NBRC 14742 / NCIMB 2012 / VKM B-1768 / DS2) (Halobacterium volcanii).